Reading from the N-terminus, the 222-residue chain is MFPFKVRKWMGLACFRSLVVSSSSIRQKKLIHKLQEEKAFREEMRHFREKIEDFREEMWNFRSKMRAFRGEILGFWEEDRLFWEEEKTFWKEEKAFWEMEKSFREEEKAFWKKYRIFWKEDRAFWKEDNALWERDRNLLQEDKALWEEEKALWVEERALLEEEKVLWEDKKTLWEEENALWEEEKAAWVEGVVPVVEQQVLEGGHHHVSGRPRSPASSRGRA.

Coiled coils occupy residues 34–62 and 129–188; these read LQEE…WNFR and NALW…KAAW.

This chain is Coiled-coil domain-containing protein 70 (CCDC70), found in Bos taurus (Bovine).